The following is a 278-amino-acid chain: 2-dehydro-3-deoxyphosphooctonate aldolase (278 aa).

It belongs to the KdsA family.

The protein resides in the cytoplasm. It carries out the reaction D-arabinose 5-phosphate + phosphoenolpyruvate + H2O = 3-deoxy-alpha-D-manno-2-octulosonate-8-phosphate + phosphate. Its pathway is carbohydrate biosynthesis; 3-deoxy-D-manno-octulosonate biosynthesis; 3-deoxy-D-manno-octulosonate from D-ribulose 5-phosphate: step 2/3. The protein operates within bacterial outer membrane biogenesis; lipopolysaccharide biosynthesis. This chain is 2-dehydro-3-deoxyphosphooctonate aldolase, found in Bartonella quintana (strain Toulouse) (Rochalimaea quintana).